The following is a 269-amino-acid chain: Hydroxyethylthiazole kinase (269 aa).

Residue Met-42 coordinates substrate. ATP is bound by residues Arg-118 and Ser-164. Gly-191 contributes to the substrate binding site.

Belongs to the Thz kinase family. The cofactor is Mg(2+).

It catalyses the reaction 5-(2-hydroxyethyl)-4-methylthiazole + ATP = 4-methyl-5-(2-phosphooxyethyl)-thiazole + ADP + H(+). It functions in the pathway cofactor biosynthesis; thiamine diphosphate biosynthesis; 4-methyl-5-(2-phosphoethyl)-thiazole from 5-(2-hydroxyethyl)-4-methylthiazole: step 1/1. In terms of biological role, catalyzes the phosphorylation of the hydroxyl group of 4-methyl-5-beta-hydroxyethylthiazole (THZ). This Listeria monocytogenes serovar 1/2a (strain ATCC BAA-679 / EGD-e) protein is Hydroxyethylthiazole kinase.